The chain runs to 730 residues: Catalase-peroxidase (730 aa).

The tryptophyl-tyrosyl-methioninium (Trp-Tyr) (with M-251) cross-link spans 92 to 225 (WHSAGTYRSI…LSAVHMGLIY (134 aa)). The active-site Proton acceptor is the His93. Positions 225-251 (YVNPEGPDGIPDPVASARDIRTTFRRM) form a cross-link, tryptophyl-tyrosyl-methioninium (Tyr-Met) (with W-92). His266 serves as a coordination point for heme b.

This sequence belongs to the peroxidase family. Peroxidase/catalase subfamily. Homodimer or homotetramer. Heme b serves as cofactor. Post-translationally, formation of the three residue Trp-Tyr-Met cross-link is important for the catalase, but not the peroxidase activity of the enzyme.

The protein resides in the cytoplasm. The enzyme catalyses H2O2 + AH2 = A + 2 H2O. The catalysed reaction is 2 H2O2 = O2 + 2 H2O. Its function is as follows. Bifunctional enzyme with both catalase and broad-spectrum peroxidase activity. The chain is Catalase-peroxidase from Blumeria hordei (Barley powdery mildew).